Consider the following 64-residue polypeptide: Purotoxin-2 (64 aa).

A knottin domain region spans residues 1–44 (AKACTPLLHDCSHDRHSCCRGDMFKYVCDCFYPEGEDKTEVCSC). 4 cysteine pairs are disulfide-bonded: C4-C19, C11-C28, C18-C44, and C30-C42. The linear cationic cytotoxin domain stretch occupies residues 45–64 (QQPKSHKIAEKIIDKAKTTL). Leucine amide is present on L64.

Belongs to the neurotoxin 19 (CSTX) family. 05 (U4-Lctx) subfamily. Amidation at Leu-64 is not mandatory for activity on P2RX3. In terms of tissue distribution, expressed by the venom gland.

It is found in the secreted. Enhances the high-affinity desensitization of human P2RX3 purinoceptors. At 50 nM, the toxin decreases the IC(50) for ambient ATP from 2.67 nM to 0.77 nM in human P2RX3. The protein is Purotoxin-2 of Alopecosa marikovskyi (Wolf spider).